A 401-amino-acid polypeptide reads, in one-letter code: Inactive leucine-rich repeat receptor-like protein kinase CORYNE (401 aa).

A signal peptide spans 1–33 (MKQRRRRNGCSSSNTISLLLLFFLVFFSRTSTS). Residues 34-62 (TSCRRRTVKHLSTTSTSSTPLESRITSKV) are Extracellular-facing. Residues 63 to 83 (IVISIVSGILTGLVSALVLAF) form a helical membrane-spanning segment. The Cytoplasmic segment spans residues 84-401 (LVRSIVKFMK…VHMLTQLHSF (318 aa)). One can recognise a Protein kinase domain in the interval 118-401 (SNGIQLLGSD…VHMLTQLHSF (284 aa)). ATP contacts are provided by residues 124 to 132 (LGSDLNGKY) and Lys146.

This sequence belongs to the protein kinase superfamily. Ser/Thr protein kinase family. In terms of assembly, self-interacts. Parts of a tetrameric complex made of two CLV2/CRN heterodimers that can interact with CLV3 and CLE peptides. CLV2/CRN heterodimer interacts with CLV1 homodimers. Interacts with CLV1 and CLV2. CLV2/CRN heterodimer can interact with BAM3. As to expression, present in roots, stems, leaves, inflorescence, flowers and siliques. Mostly expressed in shoot tips and, to a lesser extent, in young organs and roots. Also expressed in the inner tissues of the proximal root meristem. Expressed in the vascular cylinder of root tips, mostly in phloem poles.

The protein resides in the cell membrane. Its subcellular location is the endoplasmic reticulum membrane. In terms of biological role, involved in the perception of CLV3 and CLV3-like (CLE) peptides, that act as extracellular signals regulating meristem maintenance. Modulates root, shoot and flower apical meristem maintenance and floral organ development regulation, probably via CLAVATA (CLV)-like pathways involving at least CLV3 and CLE19. In complex with CLV2, perceives secreted CLV3-like effector proteins from plant-parasitic cyst nematodes as ligand mimics of the plant CLE signaling pathway. This recognition is required for proper feeding structure (syncytium) development and ultimately successful nematode infection. CLE14 perception by CLV2/CRN complex triggers root meristem differentiation. Required for the sensing of the root CLE peptides (e.g. CLE8, CLE9/CLE10, CLE11, CLE13, CLE14, CLE16, CLE17, CLE18, CLE20, CLE21, CLE25, CLE26, CLE40, CLE41/CLE44 and CLE45), which also involves CLV2 and leads to root growth regulation, mostly in the phloem and protophloem. Promotes the accumulation of BAM3, especially at later stages of protophloem development. This chain is Inactive leucine-rich repeat receptor-like protein kinase CORYNE, found in Arabidopsis thaliana (Mouse-ear cress).